A 144-amino-acid chain; its full sequence is Large ribosomal subunit protein uL15 (144 aa).

The segment covering 1–14 has biased composition (basic and acidic residues); that stretch reads MKLHELKPNEGARD. Residues 1–43 are disordered; it reads MKLHELKPNEGARDVRKRVGRGTSSGTGKTAGRGQKGQKARSK. Over residues 23 to 35 the composition is skewed to gly residues; that stretch reads TSSGTGKTAGRGQ.

Belongs to the universal ribosomal protein uL15 family. As to quaternary structure, part of the 50S ribosomal subunit.

Binds to the 23S rRNA. The polypeptide is Large ribosomal subunit protein uL15 (Latilactobacillus sakei subsp. sakei (strain 23K) (Lactobacillus sakei subsp. sakei)).